Reading from the N-terminus, the 283-residue chain is Digeranylgeranylglyceryl phosphate synthase (283 aa).

The next 8 helical transmembrane spans lie at 5-27, 37-57, 85-105, 128-148, 152-172, 203-223, 228-248, and 263-283; these read VEII…AILA, AMLA…YFDY, LLFI…DTWI, PLIG…FAGY, EGLI…MTTA, AIIA…LYIY, INYL…AVLL, and LKTG…TITF.

The protein belongs to the UbiA prenyltransferase family. DGGGP synthase subfamily. Mg(2+) serves as cofactor.

The protein resides in the cell membrane. It carries out the reaction sn-3-O-(geranylgeranyl)glycerol 1-phosphate + (2E,6E,10E)-geranylgeranyl diphosphate = 2,3-bis-O-(geranylgeranyl)-sn-glycerol 1-phosphate + diphosphate. It participates in membrane lipid metabolism; glycerophospholipid metabolism. In terms of biological role, prenyltransferase that catalyzes the transfer of the geranylgeranyl moiety of geranylgeranyl diphosphate (GGPP) to the C2 hydroxyl of (S)-3-O-geranylgeranylglyceryl phosphate (GGGP). This reaction is the second ether-bond-formation step in the biosynthesis of archaeal membrane lipids. The protein is Digeranylgeranylglyceryl phosphate synthase of Methanobrevibacter smithii (strain ATCC 35061 / DSM 861 / OCM 144 / PS).